A 600-amino-acid polypeptide reads, in one-letter code: E3 ubiquitin-protein ligase RLIM (600 aa).

N-acetylmethionine is present on methionine 1. The span at 1-11 (MENSDSNDKGS) shows a compositional bias: basic and acidic residues. Disordered stretches follow at residues 1–24 (MENS…QMDR), 49–355 (NNLL…ERGG), and 417–497 (SDSE…VTFD). 2 stretches are compositionally biased toward polar residues: residues 103–131 (SVRQ…NPNS) and 140–152 (INVN…QTSE). Serine 163 bears the Phosphoserine mark. The segment covering 166–175 (NMESSSQRQM) has biased composition (polar residues). A compositionally biased stretch (low complexity) spans 176 to 187 (ENSASESASARP). A phosphoserine mark is found at serine 194, serine 227, and serine 229. The span at 213-228 (RSPEHRRTRARAERSR) shows a compositional bias: basic and acidic residues. Over residues 244-255 (LEQSSENEPEGS) the composition is skewed to polar residues. A Phosphoserine modification is found at serine 269. Positions 288–306 (SQGTSSSDTGSNSESSGSG) are enriched in low complexity. Residues 322 to 332 (RPGEYRQRDSI) show a composition bias toward basic and acidic residues. Over residues 333–349 (ASRTRSRSQAPNNTVTY) the composition is skewed to polar residues. Low complexity predominate over residues 448–475 (SGSSSSSSPSPSSSGESSESSSEMFEGS). The segment at 546–587 (CSVCITEYTEGNKLRKLPCSHEYHVHCIDRWLSENSTCPICR) adopts an RING-type zinc-finger fold. A PDZ-binding motif is present at residues 597–600 (ESVV).

It belongs to the RNF12 family. Interacts (via N-terminus) with TERF1. Interacts (via C-terminus) with ESR1. Interacts with LIM/homeobox factors such as LHX3. Interacts with LDB1, LDB2 and SIN3A. Interacts with LIMK1.

The protein resides in the nucleus. It carries out the reaction S-ubiquitinyl-[E2 ubiquitin-conjugating enzyme]-L-cysteine + [acceptor protein]-L-lysine = [E2 ubiquitin-conjugating enzyme]-L-cysteine + N(6)-ubiquitinyl-[acceptor protein]-L-lysine.. The protein operates within protein modification; protein ubiquitination. E3 ubiquitin-protein ligase that acts as a negative coregulator for LIM homeodomain transcription factors by mediating the ubiquitination and subsequent degradation of LIM cofactors LDB1 and LDB2 and by mediating the recruitment the SIN3a/histone deacetylase corepressor complex. Ubiquitination and degradation of LIM cofactors LDB1 and LDB2 allows DNA-bound LIM homeodomain transcription factors to interact with other protein partners such as RLIM. Plays a role in telomere length-mediated growth suppression by mediating the ubiquitination and degradation of TERF1. By targeting ZFP42 for degradation, acts as an activator of random inactivation of X chromosome in the embryo, a stochastic process in which one X chromosome is inactivated to minimize sex-related dosage differences of X-encoded genes in somatic cells of female placental mammals. This Mus musculus (Mouse) protein is E3 ubiquitin-protein ligase RLIM (Rlim).